The sequence spans 463 residues: MMAATVVSRIRTGTRWAPVLWLLLSLVAVAAAVAAEQQVPLVLWSSDRDLWAPVADTHEGHITSDMQLSTYLDPALELGPRNVLLFLQDKLSIEDFTAYGGVFGNKQDSAFSNLENALDLAPSSLVLPAVDWYAISTLTTYLQEKLGASPLHVDLATLKELKLNASLPALLLIRLPYTASSGLMAPREVLTGNDEVIGQVLSTLESEDVPYTAALTAVRPSRVARDVAMVAGGLGRQLLQTQVASPAIHPPVSYNDTAPRILFWAQNFSVAYKDEWKDLTSLTFGVENLNLTGSFWNDSFAMLSLTYEPLFGATVTFKFILASRFYPVSARYWFTMERLEIHSNGSVAHFNVSQVTGPSIYSFHCEYVSSLSKKGSLLVTNVPSLWQMTLHNFQIQAFNVTGEQFSYASDCAGFFSPGIWMGLLTTLFMLFIFTYGLHMILSLKTMDRFDDRKGPTITLTQIV.

Positions M1–A32 are cleaved as a signal peptide. Residues V33 to R225 constitute a propeptide that is removed on maturation. Over V33–A412 the chain is Lumenal. N-linked (GlcNAc...) asparagine glycosylation is found at N164, N255, N267, N290, N297, N344, N351, and N399. The helical transmembrane segment at G413–F433 threads the bilayer. The Cytoplasmic segment spans residues T434 to V463.

This sequence belongs to the vacuolar ATPase subunit S1 family. As to quaternary structure, accessory component of the multisubunit proton-transporting vacuolar (V)-ATPase protein pump. Interacts (via N-terminus) with ATP6AP2 (via N-terminus). Interacts with RNASEK. Interacts with TMEM106B (via C-terminus). N-glycosylated. As to expression, expressed in brain (at protein level).

It localises to the endoplasmic reticulum membrane. The protein resides in the endoplasmic reticulum-Golgi intermediate compartment membrane. Its subcellular location is the cytoplasmic vesicle. The protein localises to the secretory vesicle. It is found in the synaptic vesicle membrane. It localises to the clathrin-coated vesicle membrane. In terms of biological role, accessory subunit of the proton-transporting vacuolar (V)-ATPase protein pump, which is required for luminal acidification of secretory vesicles. Guides the V-type ATPase into specialized subcellular compartments, such as neuroendocrine regulated secretory vesicles or the ruffled border of the osteoclast, thereby regulating its activity. Involved in membrane trafficking and Ca(2+)-dependent membrane fusion. May play a role in the assembly of the V-type ATPase complex. In aerobic conditions, involved in intracellular iron homeostasis, thus triggering the activity of Fe(2+) prolyl hydroxylase (PHD) enzymes, and leading to HIF1A hydroxylation and subsequent proteasomal degradation. In islets of Langerhans cells, may regulate the acidification of dense-core secretory granules. In Rattus norvegicus (Rat), this protein is V-type proton ATPase subunit S1 (Atp6ap1).